The chain runs to 349 residues: GTP 3',8-cyclase (349 aa).

One can recognise a Radical SAM core domain in the interval 24–249 (PFGRAVTYLR…KDMSYRTGGP (226 aa)). Arg33 contacts GTP. [4Fe-4S] cluster is bound by residues Cys40 and Cys44. Position 46 (Tyr46) interacts with S-adenosyl-L-methionine. Cys47 lines the [4Fe-4S] cluster pocket. Arg82 contacts GTP. Gly86 provides a ligand contact to S-adenosyl-L-methionine. Residue Thr116 coordinates GTP. Ser140 lines the S-adenosyl-L-methionine pocket. Lys176 contacts GTP. Met210 is a binding site for S-adenosyl-L-methionine. Cys273 and Cys276 together coordinate [4Fe-4S] cluster. 278 to 280 (RVR) is a binding site for GTP. Cys290 contacts [4Fe-4S] cluster.

This sequence belongs to the radical SAM superfamily. MoaA family. As to quaternary structure, monomer and homodimer. Requires [4Fe-4S] cluster as cofactor.

The catalysed reaction is GTP + AH2 + S-adenosyl-L-methionine = (8S)-3',8-cyclo-7,8-dihydroguanosine 5'-triphosphate + 5'-deoxyadenosine + L-methionine + A + H(+). It participates in cofactor biosynthesis; molybdopterin biosynthesis. Catalyzes the cyclization of GTP to (8S)-3',8-cyclo-7,8-dihydroguanosine 5'-triphosphate. The chain is GTP 3',8-cyclase from Sinorhizobium medicae (strain WSM419) (Ensifer medicae).